Reading from the N-terminus, the 581-residue chain is uncharacterized protein (581 aa).

Belongs to the UbiD family.

This is an uncharacterized protein from Chlamydia caviae (strain ATCC VR-813 / DSM 19441 / 03DC25 / GPIC) (Chlamydophila caviae).